Reading from the N-terminus, the 329-residue chain is Glycerol-3-phosphate dehydrogenase [NAD(P)+] (329 aa).

Trp11, Arg30, and Lys103 together coordinate NADPH. Residues Lys103, Gly132, and Ser134 each coordinate sn-glycerol 3-phosphate. Ala136 contributes to the NADPH binding site. Positions 187, 240, 250, 251, and 252 each coordinate sn-glycerol 3-phosphate. The active-site Proton acceptor is Lys187. Arg251 contacts NADPH. Val275 and Glu277 together coordinate NADPH.

The protein belongs to the NAD-dependent glycerol-3-phosphate dehydrogenase family.

The protein localises to the cytoplasm. It catalyses the reaction sn-glycerol 3-phosphate + NAD(+) = dihydroxyacetone phosphate + NADH + H(+). The catalysed reaction is sn-glycerol 3-phosphate + NADP(+) = dihydroxyacetone phosphate + NADPH + H(+). Its pathway is membrane lipid metabolism; glycerophospholipid metabolism. Catalyzes the reduction of the glycolytic intermediate dihydroxyacetone phosphate (DHAP) to sn-glycerol 3-phosphate (G3P), the key precursor for phospholipid synthesis. The polypeptide is Glycerol-3-phosphate dehydrogenase [NAD(P)+] (Dechloromonas aromatica (strain RCB)).